The primary structure comprises 119 residues: Immunoglobulin lambda variable 2-11 (119 aa).

The first 19 residues, Met-1–Ala-19, serve as a signal peptide directing secretion. Pyrrolidone carboxylic acid is present on Gln-20. The segment at Gln-20 to Thr-44 is framework-1. An Ig-like domain is found at Gln-20–His-119. An intrachain disulfide couples Cys-41 to Cys-109. A complementarity-determining-1 region spans residues Ser-45–Tyr-53. The segment at Val-54–Tyr-70 is framework-2. The complementarity-determining-2 stretch occupies residues Asp-71–Ser-73. The interval Lys-74 to Cys-109 is framework-3. Residues Cys-110–His-119 form a complementarity-determining-3 region.

As to quaternary structure, immunoglobulins are composed of two identical heavy chains and two identical light chains; disulfide-linked.

Its subcellular location is the secreted. The protein resides in the cell membrane. Its function is as follows. V region of the variable domain of immunoglobulin light chains that participates in the antigen recognition. Immunoglobulins, also known as antibodies, are membrane-bound or secreted glycoproteins produced by B lymphocytes. In the recognition phase of humoral immunity, the membrane-bound immunoglobulins serve as receptors which, upon binding of a specific antigen, trigger the clonal expansion and differentiation of B lymphocytes into immunoglobulins-secreting plasma cells. Secreted immunoglobulins mediate the effector phase of humoral immunity, which results in the elimination of bound antigens. The antigen binding site is formed by the variable domain of one heavy chain, together with that of its associated light chain. Thus, each immunoglobulin has two antigen binding sites with remarkable affinity for a particular antigen. The variable domains are assembled by a process called V-(D)-J rearrangement and can then be subjected to somatic hypermutations which, after exposure to antigen and selection, allow affinity maturation for a particular antigen. This Homo sapiens (Human) protein is Immunoglobulin lambda variable 2-11.